We begin with the raw amino-acid sequence, 335 residues long: UDP-N-acetylglucosamine--N-acetylmuramyl-(pentapeptide) pyrophosphoryl-undecaprenol N-acetylglucosamine transferase (335 aa).

UDP-N-acetyl-alpha-D-glucosamine-binding positions include 9–11, asparagine 123, serine 176, and glutamine 274; that span reads TGG.

Belongs to the glycosyltransferase 28 family. MurG subfamily.

Its subcellular location is the cell inner membrane. The catalysed reaction is di-trans,octa-cis-undecaprenyl diphospho-N-acetyl-alpha-D-muramoyl-L-alanyl-D-glutamyl-meso-2,6-diaminopimeloyl-D-alanyl-D-alanine + UDP-N-acetyl-alpha-D-glucosamine = di-trans,octa-cis-undecaprenyl diphospho-[N-acetyl-alpha-D-glucosaminyl-(1-&gt;4)]-N-acetyl-alpha-D-muramoyl-L-alanyl-D-glutamyl-meso-2,6-diaminopimeloyl-D-alanyl-D-alanine + UDP + H(+). It functions in the pathway cell wall biogenesis; peptidoglycan biosynthesis. Its function is as follows. Cell wall formation. Catalyzes the transfer of a GlcNAc subunit on undecaprenyl-pyrophosphoryl-MurNAc-pentapeptide (lipid intermediate I) to form undecaprenyl-pyrophosphoryl-MurNAc-(pentapeptide)GlcNAc (lipid intermediate II). The chain is UDP-N-acetylglucosamine--N-acetylmuramyl-(pentapeptide) pyrophosphoryl-undecaprenol N-acetylglucosamine transferase from Campylobacter fetus subsp. fetus (strain 82-40).